Consider the following 159-residue polypeptide: U1 small nuclear ribonucleoprotein C (159 aa).

The Matrin-type zinc-finger motif lies at 4–36; it reads FYCDYCDTYLTHDSPSVRKTHCSGRKHKENVKD. Tyr-8 is subject to Phosphotyrosine. Ser-17 carries the phosphoserine modification. Lys-52 bears the N6-acetyllysine mark. Disordered stretches follow at residues 62-96 and 140-159; these read IPPT…PAPH and RPPA…RPDR. Pro residues predominate over residues 63–92; sequence PPTPFSAPPPAGAMIPPPPSLPGPPRPGMM.

This sequence belongs to the U1 small nuclear ribonucleoprotein C family. In terms of assembly, component of the U1 snRNP. The U1 snRNP is composed of the U1 snRNA and the 7 core Sm proteins SNRPB, SNRPD1, SNRPD2, SNRPD3, SNRPE, SNRPF and SNRPG that assemble in a heptameric protein ring on the Sm site of the small nuclear RNA to form the core snRNP, and at least 3 U1 snRNP-specific proteins SNRNP70/U1-70K, SNRPA/U1-A and SNRPC/U1-C. SNRPC/U1-C interacts with U1 snRNA and the 5' splice-site region of the pre-mRNA. Interacts (via N-terminus) with TIA1 (via C-terminus); thereby promoting spliceosomal U1 snRNP recruitment to 5' splice sites.

Its subcellular location is the nucleus. Its function is as follows. Component of the spliceosomal U1 snRNP, which is essential for recognition of the pre-mRNA 5' splice-site and the subsequent assembly of the spliceosome. SNRPC/U1-C is directly involved in initial 5' splice-site recognition for both constitutive and regulated alternative splicing. The interaction with the 5' splice-site seems to precede base-pairing between the pre-mRNA and the U1 snRNA. Stimulates commitment or early (E) complex formation by stabilizing the base pairing of the 5' end of the U1 snRNA and the 5' splice-site region. The chain is U1 small nuclear ribonucleoprotein C from Homo sapiens (Human).